The following is a 152-amino-acid chain: Large ribosomal subunit protein bL9 (152 aa).

It belongs to the bacterial ribosomal protein bL9 family.

Its function is as follows. Binds to the 23S rRNA. The sequence is that of Large ribosomal subunit protein bL9 from Crocosphaera subtropica (strain ATCC 51142 / BH68) (Cyanothece sp. (strain ATCC 51142)).